Reading from the N-terminus, the 189-residue chain is MTIKSDKWIRRMAMEHGMIEPFEPNQVKHAPDGHKIVSYGTSSYGYDIRCSDEFKLFTNINSAIVDPKNFDSNSFVDVKSNICLIPPNSFALARTVEYFRIPRNVLTICLGKSTYARCGIIVNVTPFEPEWEGFVTLEFSNTTPLPAKIYANEGVAQVIFFESDEICETSYKDRGGKYQGQHGVTLPKI.

Residues 112 to 117, 136 to 138, Q157, Y171, and Q181 each bind dCTP; these read KSTYAR and TLE. E138 functions as the Proton donor/acceptor in the catalytic mechanism.

This sequence belongs to the dCTP deaminase family. In terms of assembly, homotrimer.

The catalysed reaction is dCTP + H2O + H(+) = dUTP + NH4(+). It functions in the pathway pyrimidine metabolism; dUMP biosynthesis; dUMP from dCTP (dUTP route): step 1/2. Catalyzes the deamination of dCTP to dUTP. The polypeptide is dCTP deaminase (Nitrosospira multiformis (strain ATCC 25196 / NCIMB 11849 / C 71)).